Reading from the N-terminus, the 133-residue chain is Small ribosomal subunit protein uS8 (133 aa).

It belongs to the universal ribosomal protein uS8 family. Part of the 30S ribosomal subunit. Contacts proteins S5 and S12.

One of the primary rRNA binding proteins, it binds directly to 16S rRNA central domain where it helps coordinate assembly of the platform of the 30S subunit. In Parasynechococcus marenigrum (strain WH8102), this protein is Small ribosomal subunit protein uS8.